The sequence spans 544 residues: Major royal jelly protein 3 (544 aa).

An N-terminal signal peptide occupies residues 1–20 (MTKWLLLVVCLGIACQDVTS). N-linked (GlcNAc...) asparagine glycosylation is present at Asn183. The segment at 421 to 544 (RYHNQNAGNQ…NQVHHSSKLH (124 aa)) is disordered. 20 consecutive repeat copies span residues 424–428 (NQNAG), 429–433 (NQNAD), 434–438 (NQNAD), 439–443 (NQNAN), 444–448 (NQNAD), 449–453 (NQNAN), 454–458 (KQNGN), 459–463 (RQNDN), 464–468 (RQNDN), 469–473 (KQNGN), 474–478 (RQNDN), 479–483 (KQNGN), 484–488 (RQNDN), 489–493 (KQNGN), 494–498 (RQNGN), 499–503 (KQNDN), 504–508 (KQNGN), 509–513 (RQNDN), 514–518 (KRNGN), and 519–523 (RQNDN). Low complexity-rich tracts occupy residues 424–460 (NQNA…GNRQ), 468–510 (NKQN…GNRQ), and 518–530 (NRQN…QNDN). The 23 X 5 AA tandem repeats of [NKR]-[RQ]-N-[AGD]-[DNG] stretch occupies residues 424–523 (NQNAGNQNAD…KRNGNRQNDN (100 aa)). The 21; half-length repeat unit spans residues 524–525 (QN). 2 repeat units span residues 526–530 (NQNDN) and 531–535 (NRNDN).

It belongs to the major royal jelly protein family. Homoligomer; in the absence of RNA, assembles into a higher-order oligomeric form, composed of around 20 monomer units. As to expression, found in and secreted from the hypopharyngeal glands of the worker honey bee (at protein level); expression peaks at 12 days post eclosion. Expressed in the brains of worker bees. Expressed in the brains of adult worker bees peaking at 12 days post eclosion (at protein level). Expressed in the spermatheca of adult queen bees (at protein level); Expression levels are higher in mated queens than in virgin queens. Expressed in queen bee ovaries and male drone testes. Expression in the head of forager worker bees is lower than in the heads of nurse worker bees.

Its subcellular location is the secreted. Abundant protein component of royal jelly, a substance produced in the hypopharyngeal gland containing proteins, free amino acids, fatty acids, sugars and other nutrients, which is fed to developing larvae by worker nurse bees. Major royal jelly proteins (MRJPs) are high in essential amino acids and probably have a nutritional function in larval food. All larvae are fed some royal jelly (also known as worker jelly) early in their development but it forms the principal source of nutrition for larvae destined to become queen bees. Secreted RNA-binding protein required to concentrate, stabilize and enhance environmental RNA bioavailability in the honey bee royal jelly. Acts as a RNA-aggregating protein: binds 18 nucleotides and longer single- and double-stranded RNA (ssRNA and dsRNA, respectively) in a non-specific manner. RNA-binding drives super-order assembly of oligomers into extracellular ribonucleoprotein granules that concentrate, protect and enhance RNA uptake granules, facilitating RNA transfer among bees. Produced in the spermatheca of adult queen bees, along with other major royal jelly proteins, where it may act as a nutrient supply for sperm stored by mated queens, or be involved in energy metabolism. This is Major royal jelly protein 3 from Apis mellifera (Honeybee).